A 614-amino-acid polypeptide reads, in one-letter code: 1-deoxy-D-xylulose-5-phosphate synthase (614 aa).

Thiamine diphosphate is bound by residues histidine 76 and 117 to 119 (GHS). Aspartate 148 is a binding site for Mg(2+). Thiamine diphosphate-binding positions include 149 to 150 (GA), asparagine 177, tyrosine 285, and glutamate 366. Asparagine 177 is a Mg(2+) binding site.

This sequence belongs to the transketolase family. DXPS subfamily. In terms of assembly, homodimer. The cofactor is Mg(2+). Thiamine diphosphate is required as a cofactor.

It catalyses the reaction D-glyceraldehyde 3-phosphate + pyruvate + H(+) = 1-deoxy-D-xylulose 5-phosphate + CO2. Its pathway is metabolic intermediate biosynthesis; 1-deoxy-D-xylulose 5-phosphate biosynthesis; 1-deoxy-D-xylulose 5-phosphate from D-glyceraldehyde 3-phosphate and pyruvate: step 1/1. In terms of biological role, catalyzes the acyloin condensation reaction between C atoms 2 and 3 of pyruvate and glyceraldehyde 3-phosphate to yield 1-deoxy-D-xylulose-5-phosphate (DXP). In Pasteurella multocida (strain Pm70), this protein is 1-deoxy-D-xylulose-5-phosphate synthase.